Consider the following 206-residue polypeptide: Large ribosomal subunit protein uL4 (206 aa).

The segment covering 42 to 54 (RRQQGTHQSQGRS) has biased composition (polar residues). The interval 42 to 93 (RRQQGTHQSQGRSDVSRTGAKMFKQKGTGRARHSSARAPQFRGGGKAHGPVV) is disordered. A compositionally biased stretch (basic residues) spans 64–76 (FKQKGTGRARHSS).

Belongs to the universal ribosomal protein uL4 family. As to quaternary structure, part of the 50S ribosomal subunit.

One of the primary rRNA binding proteins, this protein initially binds near the 5'-end of the 23S rRNA. It is important during the early stages of 50S assembly. It makes multiple contacts with different domains of the 23S rRNA in the assembled 50S subunit and ribosome. Its function is as follows. Forms part of the polypeptide exit tunnel. In Bartonella henselae (strain ATCC 49882 / DSM 28221 / CCUG 30454 / Houston 1) (Rochalimaea henselae), this protein is Large ribosomal subunit protein uL4.